Reading from the N-terminus, the 263-residue chain is Lysine 5,6-aminomutase beta subunit (263 aa).

The 140-residue stretch at 120 to 259 (EVVMVGASTG…TFILKEMVQR (140 aa)) folds into the B12-binding domain. Adenosylcob(III)alamin is bound by residues 130–136 (TDAHTVG) and histidine 133. Lysine 144 is subject to N6-(pyridoxal phosphate)lysine. Adenosylcob(III)alamin-binding positions include 185–192 (LVSQTVTQ), 219–223 (IAGGA), and 239–244 (FGPGKY).

It belongs to the KamE family. Heterotetramer of 2 alpha and 2 beta subunits. It depends on adenosylcob(III)alamin as a cofactor. The cofactor is pyridoxal 5'-phosphate.

The enzyme catalyses (3S)-3,6-diaminohexanoate = (3S,5S)-3,5-diaminohexanoate. The catalysed reaction is D-lysine = (2R,5S)-2,5-diaminohexanoate. Its pathway is amino-acid degradation; L-lysine degradation via acetate pathway. Catalyzes the migration of the L-beta-lysine and D-lysine epsilon amino group to the delta carbon to produce 3,5-diaminohexanoate and 2,5-diaminohexanoate, respectively. This Fusobacterium nucleatum subsp. nucleatum (strain ATCC 25586 / DSM 15643 / BCRC 10681 / CIP 101130 / JCM 8532 / KCTC 2640 / LMG 13131 / VPI 4355) protein is Lysine 5,6-aminomutase beta subunit.